We begin with the raw amino-acid sequence, 118 residues long: UPF0295 protein BC_0520 (118 aa).

Helical transmembrane passes span 12–32 (IRTFALSLVFIGLFIAYLGVF) and 43–63 (FMMVGFLAVIASTVVYFWIGM).

This sequence belongs to the UPF0295 family.

The protein localises to the cell membrane. This is UPF0295 protein BC_0520 from Bacillus cereus (strain ATCC 14579 / DSM 31 / CCUG 7414 / JCM 2152 / NBRC 15305 / NCIMB 9373 / NCTC 2599 / NRRL B-3711).